The primary structure comprises 557 residues: Aerobic glycerol-3-phosphate dehydrogenase (557 aa).

An FAD-binding site is contributed by 21 to 49 (DLVIIGGGITGAGIALDASERGMKVALVE).

The protein belongs to the FAD-dependent glycerol-3-phosphate dehydrogenase family. Requires FAD as cofactor.

The protein resides in the cytoplasm. The enzyme catalyses a quinone + sn-glycerol 3-phosphate = dihydroxyacetone phosphate + a quinol. The protein operates within polyol metabolism; glycerol degradation via glycerol kinase pathway; glycerone phosphate from sn-glycerol 3-phosphate (aerobic route): step 1/1. In Staphylococcus aureus (strain USA300), this protein is Aerobic glycerol-3-phosphate dehydrogenase (glpD).